Here is a 124-residue protein sequence, read N- to C-terminus: S-adenosylmethionine decarboxylase proenzyme (124 aa).

Catalysis depends on S70, which acts as the Schiff-base intermediate with substrate; via pyruvic acid. S70 is modified (pyruvic acid (Ser); by autocatalysis). Residue H75 is the Proton acceptor; for processing activity of the active site. C90 (proton donor; for catalytic activity) is an active-site residue.

This sequence belongs to the prokaryotic AdoMetDC family. Type 1 subfamily. Heterotetramer of two alpha and two beta chains arranged as a dimer of alpha/beta heterodimers. Pyruvate is required as a cofactor. Is synthesized initially as an inactive proenzyme. Formation of the active enzyme involves a self-maturation process in which the active site pyruvoyl group is generated from an internal serine residue via an autocatalytic post-translational modification. Two non-identical subunits are generated from the proenzyme in this reaction, and the pyruvate is formed at the N-terminus of the alpha chain, which is derived from the carboxyl end of the proenzyme. The post-translation cleavage follows an unusual pathway, termed non-hydrolytic serinolysis, in which the side chain hydroxyl group of the serine supplies its oxygen atom to form the C-terminus of the beta chain, while the remainder of the serine residue undergoes an oxidative deamination to produce ammonia and the pyruvoyl group blocking the N-terminus of the alpha chain.

The catalysed reaction is S-adenosyl-L-methionine + H(+) = S-adenosyl 3-(methylsulfanyl)propylamine + CO2. It functions in the pathway amine and polyamine biosynthesis; S-adenosylmethioninamine biosynthesis; S-adenosylmethioninamine from S-adenosyl-L-methionine: step 1/1. In terms of biological role, catalyzes the decarboxylation of S-adenosylmethionine to S-adenosylmethioninamine (dcAdoMet), the propylamine donor required for the synthesis of the polyamines spermine and spermidine from the diamine putrescine. This Pyrobaculum neutrophilum (strain DSM 2338 / JCM 9278 / NBRC 100436 / V24Sta) (Thermoproteus neutrophilus) protein is S-adenosylmethionine decarboxylase proenzyme.